Consider the following 337-residue polypeptide: Large ribosomal subunit protein uL3 (337 aa).

A disordered region spans residues 1-20 (MASIHRPKRGSLAFSPRKRA).

It belongs to the universal ribosomal protein uL3 family. Part of the 50S ribosomal subunit. Forms a cluster with proteins L14 and L24e.

Functionally, one of the primary rRNA binding proteins, it binds directly near the 3'-end of the 23S rRNA, where it nucleates assembly of the 50S subunit. This Methanosarcina barkeri (strain Fusaro / DSM 804) protein is Large ribosomal subunit protein uL3.